A 291-amino-acid polypeptide reads, in one-letter code: Oxidative stress-responsive serine-rich protein 1 (291 aa).

The interval 29-139 is disordered; sequence ISLSVGEGPS…NAGENSTSLD (111 aa). The span at 65–83 shows a compositional bias: basic residues; the sequence is STRKSSRGAVRTQRRRRSK. The segment covering 95–105 has biased composition (polar residues); that stretch reads CSTTAPPSSSQ. The residue at position 143 (threonine 143) is a Phosphothreonine.

The polypeptide is Oxidative stress-responsive serine-rich protein 1 (Oser1) (Mus musculus (Mouse)).